Here is a 500-residue protein sequence, read N- to C-terminus: ATP synthase subunit beta (500 aa).

157–164 is a binding site for ATP; sequence GGAGVGKT.

Belongs to the ATPase alpha/beta chains family. In terms of assembly, F-type ATPases have 2 components, CF(1) - the catalytic core - and CF(0) - the membrane proton channel. CF(1) has five subunits: alpha(3), beta(3), gamma(1), delta(1), epsilon(1). CF(0) has three main subunits: a(1), b(2) and c(9-12). The alpha and beta chains form an alternating ring which encloses part of the gamma chain. CF(1) is attached to CF(0) by a central stalk formed by the gamma and epsilon chains, while a peripheral stalk is formed by the delta and b chains.

It localises to the cell inner membrane. It catalyses the reaction ATP + H2O + 4 H(+)(in) = ADP + phosphate + 5 H(+)(out). In terms of biological role, produces ATP from ADP in the presence of a proton gradient across the membrane. The catalytic sites are hosted primarily by the beta subunits. This is ATP synthase subunit beta from Salinibacter ruber (strain DSM 13855 / M31).